A 289-amino-acid chain; its full sequence is Nodulation protein NolT (289 aa).

The N-terminal stretch at 1–33 (MFGSAHGDTTSSDTSGRRPLRLVVLPLLLALSS) is a signal peptide. The N-palmitoyl cysteine moiety is linked to residue Cys-34. Cys-34 carries S-diacylglycerol cysteine lipidation. The chain crosses the membrane as a helical span at residues 233-253 (VAVGVSAAVFAVTCYLLFIVL).

Belongs to the YscJ lipoprotein family.

It is found in the cell outer membrane. The chain is Nodulation protein NolT (nolT) from Sinorhizobium fredii (strain NBRC 101917 / NGR234).